We begin with the raw amino-acid sequence, 75 residues long: Dermaseptin-DA2 (75 aa).

A signal peptide spans 1 to 22 (MALVKKSLFLVLFLGLVSLSIC). Residues 23-42 (EEKRENEDEEEQEDDEQSEE) constitute a propeptide that is removed on maturation.

The protein belongs to the frog skin active peptide (FSAP) family. Dermaseptin subfamily. Expressed by the skin glands.

Its subcellular location is the secreted. Functionally, possesses a potent antimicrobial activity against Gram-positive and Gram-negative bacteria. Probably acts by disturbing membrane functions with its amphipathic structure. This is Dermaseptin-DA2 from Agalychnis dacnicolor (Giant Mexican leaf frog).